Reading from the N-terminus, the 222-residue chain is Putative N-acetylmannosamine-6-phosphate 2-epimerase (222 aa).

It belongs to the NanE family.

It catalyses the reaction an N-acyl-D-glucosamine 6-phosphate = an N-acyl-D-mannosamine 6-phosphate. Its pathway is amino-sugar metabolism; N-acetylneuraminate degradation; D-fructose 6-phosphate from N-acetylneuraminate: step 3/5. Its function is as follows. Converts N-acetylmannosamine-6-phosphate (ManNAc-6-P) to N-acetylglucosamine-6-phosphate (GlcNAc-6-P). This chain is Putative N-acetylmannosamine-6-phosphate 2-epimerase, found in Oceanobacillus iheyensis (strain DSM 14371 / CIP 107618 / JCM 11309 / KCTC 3954 / HTE831).